A 112-amino-acid polypeptide reads, in one-letter code: Small ribosomal subunit protein uS11c (112 aa).

The protein belongs to the universal ribosomal protein uS11 family. Part of the 30S ribosomal subunit.

The protein resides in the plastid. In Euglena longa (Euglenophycean alga), this protein is Small ribosomal subunit protein uS11c.